A 230-amino-acid polypeptide reads, in one-letter code: Type 4 apparatus protein DotY (230 aa).

A disordered region spans residues 202-230; sequence EPKALETKREEIRQEIESGAEAPTTQSIR. Basic and acidic residues predominate over residues 204–217; that stretch reads KALETKREEIRQEI.

The T4BSS is a complex nanomachine composed of several subcomplexes. This subunit is part of the Type IV Coupling Complex (T4CC), a subcomplex composed of the DotLMNYZ core and the IcmSW-LvgA adapter subunits, linked by the C-terminal tail of DotL. Six DotLMNYZ hetero-pentameric units may assemble into a hexameric nanomachine, forming an inner membrane channel for effectors to pass through. Interacts exclusively with DotZ. DotY and DotZ are co-dependent for the assembly into the T4CC.

The protein resides in the cytoplasm. In terms of biological role, component of the Dot/Icm type IVB secretion system (T4BSS), which is used to inject bacterial effector proteins into eukaryotic host cells. Part of a subcomplex which recruits effector proteins and delivers them to the core transmembrane subcomplex. DotY and DotZ play a role in effector translocation, but are not essential and do not influence the stability of the subcomplex main components. The DotY/DotZ main function is to optimize secretion by modulating the delivery trajectory of the IcmSW module and the localization of the machinery to the poles. The protein is Type 4 apparatus protein DotY of Legionella pneumophila subsp. pneumophila (strain Philadelphia 1 / ATCC 33152 / DSM 7513).